The following is a 997-amino-acid chain: Disease resistance protein RML1A (997 aa).

The TIR domain maps to 12–176; sequence WRYRVFTSFH…KIARDVSEKL (165 aa). E87 is a catalytic residue. Residues 191–447 enclose the NB-ARC domain; sequence EAHLRKIQSL…HIAIFFNYED (257 aa). LRR repeat units lie at residues 194-218, 534-557, 600-623, 624-647, 649-670, 671-693, 694-714, 715-737, 758-781, and 783-808; these read LRKI…GPAG, TSGI…RFLS, AENL…TQLL, TKLK…SNAT, LEML…IKNL, HKLD…NINL, ASLE…PAFS, TKIK…ITHC, PSSL…CIKD, and QRLD…SLRL.

It carries out the reaction NAD(+) + H2O = ADP-D-ribose + nicotinamide + H(+). In terms of biological role, TIR-NB-LRR receptor-like protein that confers resistance to the pathogen Leptosphaeria maculans (blackleg disease). The polypeptide is Disease resistance protein RML1A (Arabidopsis thaliana (Mouse-ear cress)).